The sequence spans 239 residues: Ribonuclease 3 (239 aa).

One can recognise an RNase III domain in the interval 18 to 141 (YLTLEKALGY…LMAGVYLEAG (124 aa)). E54 is a binding site for Mg(2+). D58 is a catalytic residue. Residues S127 and E130 each contribute to the Mg(2+) site. The active site involves E130. In terms of domain architecture, DRBM spans 168 to 237 (DYKTALQELT…AYQALQKLKE (70 aa)).

This sequence belongs to the ribonuclease III family. As to quaternary structure, homodimer. Mg(2+) is required as a cofactor.

It is found in the cytoplasm. It catalyses the reaction Endonucleolytic cleavage to 5'-phosphomonoester.. Its function is as follows. Digests double-stranded RNA. Involved in the processing of primary rRNA transcript to yield the immediate precursors to the large and small rRNAs (23S and 16S). Processes some mRNAs, and tRNAs when they are encoded in the rRNA operon. Processes pre-crRNA and tracrRNA of type II CRISPR loci if present in the organism. This is Ribonuclease 3 from Helicobacter pylori (strain P12).